Here is a 520-residue protein sequence, read N- to C-terminus: Transcription factor MYB33 (520 aa).

Positions 1 to 24 (MSYTSTDSDHNESPAADDNGSDCR) are disordered. HTH myb-type domains follow at residues 29–81 (GHAL…ANHL) and 82–136 (RPNL…KRRQ). 2 consecutive DNA-binding regions (H-T-H motif) follow at residues 57–81 (WNAV…ANHL) and 109–132 (WARM…NTRI). The segment covering 331–342 (SSSPPHSDLLDP) has biased composition (low complexity). 2 disordered regions span residues 331–359 (SSSP…GEES) and 426–447 (EMST…RKPL).

As to expression, mostly expressed in stems, shoot apices, flowers and floral shoot tips, and, to a lower extent, in roots (e.g. root tips), seedlings, leaves and siliques.

Its subcellular location is the nucleus. Its function is as follows. Transcriptional activator of alpha-amylase expression that binds to 5'-CAACTGTC-3' motif in target gene promoter. Positive regulator of abscisic acid (ABA) responses leading to growth arrest during seed germination. In vegetative tissues, inhibits growth by reducing cell proliferation. Promotes the expression of aleurone-related genes (e.g. CP1, CP, GASA1, BXL1 and BXL2) in seeds. Together with MYB65 and MYB101, promotes the programmed cell death (PCD) the vacuolation of protein storage vacuoles (PSVs) in the aleurone layers during seed germination. Binds to a GARE site (GA-response element) in the LEAFY promoter, essential for its gibberellic acid (GA)-mediated induction. Together with MYB65, facilitates anther and tapetum development. This chain is Transcription factor MYB33, found in Arabidopsis thaliana (Mouse-ear cress).